A 549-amino-acid polypeptide reads, in one-letter code: Cation/acetate symporter ActP (549 aa).

13 helical membrane-spanning segments follow: residues 33–53, 77–97, 103–123, 148–168, 183–203, 206–226, 262–282, 303–323, 355–375, 404–424, 428–448, 464–484, and 493–513; these read WQAIIMFLIFVVFTLGITYWA, LAIAGDYMSAASFLGISALVF, GLIYSLGFLVGWPIILFLIAE, ILSACGSLVVVALYLIAQMVG, IAVVLVGVLMMMYVLFGGMLA, WVQIIKAVLLLFGASFMAFMV, ISALSLGLGLMFGTAGLPHIL, GFMGYFYILTFIIGFGAIMLV, LFLGFISAVAFATILAVVAGL, VSKITVLILGVIAIILGVLFE, IAFMVGLAFAIAASCNFPIIL, GGWLGLITAVVLMILGPTIWV, and IFPYEYPALFSISVAFLGIWF.

This sequence belongs to the sodium:solute symporter (SSF) (TC 2.A.21) family.

The protein resides in the cell inner membrane. Transports acetate. This is Cation/acetate symporter ActP from Escherichia coli O8 (strain IAI1).